The following is a 161-amino-acid chain: Cyclic pyranopterin monophosphate synthase (161 aa).

Substrate-binding positions include 73 to 75 and 110 to 111; these read LCH and ME. The active site involves D125.

This sequence belongs to the MoaC family. In terms of assembly, homohexamer; trimer of dimers.

The enzyme catalyses (8S)-3',8-cyclo-7,8-dihydroguanosine 5'-triphosphate = cyclic pyranopterin phosphate + diphosphate. It participates in cofactor biosynthesis; molybdopterin biosynthesis. In terms of biological role, catalyzes the conversion of (8S)-3',8-cyclo-7,8-dihydroguanosine 5'-triphosphate to cyclic pyranopterin monophosphate (cPMP). This chain is Cyclic pyranopterin monophosphate synthase, found in Pseudomonas syringae pv. tomato (strain ATCC BAA-871 / DC3000).